A 286-amino-acid chain; its full sequence is Putative sugar uptake protein lin0215 (286 aa).

Helical transmembrane passes span 4-26 (MIALIPALLWGTVPLIITKFGGS), 33-55 (GMTLGALTFAVIVFFFTDPVYTL), 114-136 (LRIILGFIALALIVGGIFLTSYA), 149-167 (GLITLVISSLGYVGLVVLI), 177-194 (AILPQAIGMVLSALIMTH), 207-226 (LLLIIPGMIWAAGNVAMVHA), 230-252 (VGVATGFSLSQLGVVISTIGGIV), and 264-283 (LYVIVGVVLVVLGGILIGVA).

The protein belongs to the GRP transporter (TC 2.A.7.5) family.

The protein resides in the cell membrane. The protein is Putative sugar uptake protein lin0215 of Listeria innocua serovar 6a (strain ATCC BAA-680 / CLIP 11262).